We begin with the raw amino-acid sequence, 114 residues long: UPF0102 protein HP_0823 (114 aa).

This sequence belongs to the UPF0102 family.

The protein is UPF0102 protein HP_0823 of Helicobacter pylori (strain ATCC 700392 / 26695) (Campylobacter pylori).